A 164-amino-acid chain; its full sequence is Cyclic pyranopterin monophosphate synthase (164 aa).

Substrate contacts are provided by residues 73–75 (LCH) and 111–112 (ME). The active site involves Asp126.

This sequence belongs to the MoaC family. As to quaternary structure, homohexamer; trimer of dimers.

It carries out the reaction (8S)-3',8-cyclo-7,8-dihydroguanosine 5'-triphosphate = cyclic pyranopterin phosphate + diphosphate. It participates in cofactor biosynthesis; molybdopterin biosynthesis. Catalyzes the conversion of (8S)-3',8-cyclo-7,8-dihydroguanosine 5'-triphosphate to cyclic pyranopterin monophosphate (cPMP). The sequence is that of Cyclic pyranopterin monophosphate synthase from Herpetosiphon aurantiacus (strain ATCC 23779 / DSM 785 / 114-95).